Here is a 189-residue protein sequence, read N- to C-terminus: Haloacid dehalogenase-like hydrolase domain-containing protein 3 (189 aa).

This sequence belongs to the HAD-like hydrolase superfamily.

The sequence is that of Haloacid dehalogenase-like hydrolase domain-containing protein 3 (hdhd3) from Xenopus tropicalis (Western clawed frog).